The chain runs to 160 residues: Tic20 family protein (160 aa).

4 consecutive transmembrane segments (helical) span residues 13 to 33 (FFSA…GGFL), 53 to 73 (FYYQ…MAVV), 87 to 107 (MQAI…AYVI), and 122 to 142 (NFAF…SVLG).

The protein belongs to the Tic20 family.

Its subcellular location is the cell membrane. The polypeptide is Tic20 family protein (Synechocystis sp. (strain ATCC 27184 / PCC 6803 / Kazusa)).